A 236-amino-acid polypeptide reads, in one-letter code: UPF0257 lipoprotein YnfC (236 aa).

Positions 1 to 16 (MKYKLLPCLLAILLTG) are cleaved as a signal peptide. A lipid anchor (N-palmitoyl cysteine) is attached at Cys17. Residue Cys17 is the site of S-diacylglycerol cysteine attachment.

It belongs to the UPF0257 family.

The protein resides in the cell membrane. This chain is UPF0257 lipoprotein YnfC, found in Escherichia coli O127:H6 (strain E2348/69 / EPEC).